The sequence spans 129 residues: UPF0102 protein RD1_1191 (129 aa).

The protein belongs to the UPF0102 family.

This Roseobacter denitrificans (strain ATCC 33942 / OCh 114) (Erythrobacter sp. (strain OCh 114)) protein is UPF0102 protein RD1_1191.